Here is a 55-residue protein sequence, read N- to C-terminus: Large ribosomal subunit protein bL33 (55 aa).

The protein belongs to the bacterial ribosomal protein bL33 family.

This is Large ribosomal subunit protein bL33 from Yersinia enterocolitica serotype O:8 / biotype 1B (strain NCTC 13174 / 8081).